Reading from the N-terminus, the 2182-residue chain is Autophagy-related protein 2 (2182 aa).

Disordered regions lie at residues 291–375, 392–426, 523–630, 663–682, 736–758, and 793–816; these read SPSL…PLAD, EQDY…ATPR, YTHE…STTL, DIDP…VATP, GAFS…SSVE, and DKKP…SKET. 2 stretches are compositionally biased toward polar residues: residues 303 to 313 and 322 to 331; these read NPPSRQATELS and VSSSQASIRS. The span at 332–347 shows a compositional bias: basic and acidic residues; sequence NEPESASHHSLPENDH. 2 stretches are compositionally biased toward acidic residues: residues 528 to 540 and 613 to 624; these read AENE…EQTT and WDDDYDDPEEEP. Polar residues predominate over residues 745 to 758; sequence HAQQRSSQGTSSVE. Residues 793-813 are compositionally biased toward basic and acidic residues; the sequence is DKKPSPAEGSKQDTASKDAPS.

Belongs to the ATG2 family. In terms of assembly, interacts with ATG18.

The protein resides in the preautophagosomal structure membrane. Its subcellular location is the endoplasmic reticulum membrane. It catalyses the reaction a 1,2-diacyl-sn-glycero-3-phosphocholine(in) = a 1,2-diacyl-sn-glycero-3-phosphocholine(out). The enzyme catalyses a 1,2-diacyl-sn-glycero-3-phospho-L-serine(in) = a 1,2-diacyl-sn-glycero-3-phospho-L-serine(out). It carries out the reaction a 1,2-diacyl-sn-glycero-3-phosphoethanolamine(in) = a 1,2-diacyl-sn-glycero-3-phosphoethanolamine(out). Functionally, lipid transfer protein required for autophagosome completion and peroxisome degradation and peroxisome degradation. Tethers the edge of the isolation membrane (IM) to the endoplasmic reticulum (ER) and mediates direct lipid transfer from ER to IM for IM expansion. ATG2 binds to the ER exit site (ERES), which is the membrane source for autophagosome formation, using basic residues in its N-terminal region (NR) and to the expanding edge of the IM through its C-terminal region. The latter binding is assisted by an ATG18-PtdIns3P interaction. ATG2 then extracts phospholipids from the membrane source using its NR and transfers them to ATG9 to the IM through its predicted beta-sheet-rich structure for membrane expansion. Autophagy is required for proper vegetative growth, asexual/sexual reproduction, and full virulence. Autophagy is particularly involved in the biosynthesis of deoxynivalenol (DON), an important virulence determinant. In Gibberella zeae (strain ATCC MYA-4620 / CBS 123657 / FGSC 9075 / NRRL 31084 / PH-1) (Wheat head blight fungus), this protein is Autophagy-related protein 2.